Consider the following 627-residue polypeptide: BURP domain-containing protein 12 (627 aa).

An N-terminal signal peptide occupies residues 1–25; it reads MASPPHLPLLLLLLVVVCNAAGGDG. Residues Asn-119, Asn-175, Asn-251, Asn-366, Asn-384, and Asn-530 are each glycosylated (N-linked (GlcNAc...) asparagine). Positions 415–626 constitute a BURP domain; that stretch reads FFRETELVSG…FEGDMTWTVA (212 aa).

Expressed in stems, leaves, shoot and panicles.

In Oryza sativa subsp. japonica (Rice), this protein is BURP domain-containing protein 12 (BURP12).